A 287-amino-acid chain; its full sequence is 2-dehydro-3-deoxyphosphooctonate aldolase (287 aa).

Belongs to the KdsA family.

It is found in the cytoplasm. The enzyme catalyses D-arabinose 5-phosphate + phosphoenolpyruvate + H2O = 3-deoxy-alpha-D-manno-2-octulosonate-8-phosphate + phosphate. It participates in carbohydrate biosynthesis; 3-deoxy-D-manno-octulosonate biosynthesis; 3-deoxy-D-manno-octulosonate from D-ribulose 5-phosphate: step 2/3. The protein operates within bacterial outer membrane biogenesis; lipopolysaccharide biosynthesis. The chain is 2-dehydro-3-deoxyphosphooctonate aldolase from Rhodopseudomonas palustris (strain BisB5).